The sequence spans 227 residues: Cytidylate kinase (227 aa).

10–18 (GPASSGKST) contributes to the ATP binding site.

The protein belongs to the cytidylate kinase family. Type 1 subfamily.

The protein localises to the cytoplasm. It catalyses the reaction CMP + ATP = CDP + ADP. The catalysed reaction is dCMP + ATP = dCDP + ADP. In Streptococcus agalactiae serotype V (strain ATCC BAA-611 / 2603 V/R), this protein is Cytidylate kinase.